The chain runs to 173 residues: Crossover junction endodeoxyribonuclease RuvC (173 aa).

Active-site residues include D8, E67, and D139. Positions 8, 67, and 139 each coordinate Mg(2+).

The protein belongs to the RuvC family. As to quaternary structure, homodimer which binds Holliday junction (HJ) DNA. The HJ becomes 2-fold symmetrical on binding to RuvC with unstacked arms; it has a different conformation from HJ DNA in complex with RuvA. In the full resolvosome a probable DNA-RuvA(4)-RuvB(12)-RuvC(2) complex forms which resolves the HJ. The cofactor is Mg(2+).

It is found in the cytoplasm. The catalysed reaction is Endonucleolytic cleavage at a junction such as a reciprocal single-stranded crossover between two homologous DNA duplexes (Holliday junction).. In terms of biological role, the RuvA-RuvB-RuvC complex processes Holliday junction (HJ) DNA during genetic recombination and DNA repair. Endonuclease that resolves HJ intermediates. Cleaves cruciform DNA by making single-stranded nicks across the HJ at symmetrical positions within the homologous arms, yielding a 5'-phosphate and a 3'-hydroxyl group; requires a central core of homology in the junction. The consensus cleavage sequence is 5'-(A/T)TT(C/G)-3'. Cleavage occurs on the 3'-side of the TT dinucleotide at the point of strand exchange. HJ branch migration catalyzed by RuvA-RuvB allows RuvC to scan DNA until it finds its consensus sequence, where it cleaves and resolves the cruciform DNA. The chain is Crossover junction endodeoxyribonuclease RuvC from Citrobacter koseri (strain ATCC BAA-895 / CDC 4225-83 / SGSC4696).